We begin with the raw amino-acid sequence, 512 residues long: MESPSYKNLIKAEDAQKKAGKRLLSSEWYPGFHVTPLTGWMNDPNGLIFFKGEYHLFYQYYPFAPVWGPMHWGHAKSRDLVHWETLPVALAPGDSFDRDGCFSGCAVDNNGVLTLIYTGHIVLSNDSPDAIREVQCMATSIDGIHFQKEGIVLEKAPMPQVAHFRDPRVWKENDHWFMVVGYRTDDKKHQGIGHVALYRSENLKDWIFVKTLLGDNSQLPLGKRAFMWECPDFFSLGNRSVLMFSPQGLKASGYKNRNLFQNGYILGKWQAPQFTPETSFQELDYGHDFYAAQRFEAKDGRQILIAWFDMWENQKPSQRDGWAGCMTLPRKLDLIDNKIVMTPVREMEILRQSEKIESVVTLSDAEHPFTMDSPLQEIELIFDLEKSNAYQAGLALRCNGKGQETLLYIDRSQNRIILDRNRSGQNVKGIRSCPLPNTSKVRLHIFLDRSSIEIFVGDDQTQGLYSISSRIFPDKDSLKGRLFAIEGYAVFDSFKRWTLQDANLAAFSSDAC.

Substrate is bound by residues 40–43, Gln-59, Trp-67, 102–103, 165–166, Glu-229, and Trp-311; these read WMND, FS, and RD. Asp-43 is an active-site residue.

This sequence belongs to the glycosyl hydrolase 32 family.

It is found in the cytoplasm. It catalyses the reaction Hydrolysis of terminal non-reducing beta-D-fructofuranoside residues in beta-D-fructofuranosides.. It functions in the pathway glycan biosynthesis; sucrose metabolism. This Zymomonas mobilis subsp. mobilis (strain ATCC 10988 / DSM 424 / LMG 404 / NCIMB 8938 / NRRL B-806 / ZM1) protein is Sucrose-6-phosphate hydrolase (sacA).